The sequence spans 343 residues: Ribosomal RNA small subunit methyltransferase C (343 aa).

Belongs to the methyltransferase superfamily. RsmC family. In terms of assembly, monomer.

The protein localises to the cytoplasm. It carries out the reaction guanosine(1207) in 16S rRNA + S-adenosyl-L-methionine = N(2)-methylguanosine(1207) in 16S rRNA + S-adenosyl-L-homocysteine + H(+). Its function is as follows. Specifically methylates the guanine in position 1207 of 16S rRNA in the 30S particle. The polypeptide is Ribosomal RNA small subunit methyltransferase C (Escherichia coli O6:K15:H31 (strain 536 / UPEC)).